Consider the following 295-residue polypeptide: Indole-3-glycerol phosphate synthase (295 aa).

It belongs to the TrpC family.

It catalyses the reaction 1-(2-carboxyphenylamino)-1-deoxy-D-ribulose 5-phosphate + H(+) = (1S,2R)-1-C-(indol-3-yl)glycerol 3-phosphate + CO2 + H2O. It functions in the pathway amino-acid biosynthesis; L-tryptophan biosynthesis; L-tryptophan from chorismate: step 4/5. The sequence is that of Indole-3-glycerol phosphate synthase from Prochlorococcus marinus (strain MIT 9515).